Consider the following 128-residue polypeptide: UPF0292 protein MJ1624 (128 aa).

The 83-residue stretch at 23 to 105 (EKPIIVEGKR…KVNTKIRHEI (83 aa)) folds into the Toprim domain. Residues Glu29, Asp74, and Asp76 each contribute to the Mg(2+) site.

Belongs to the UPF0292 family. The cofactor is Mg(2+).

The protein is UPF0292 protein MJ1624 of Methanocaldococcus jannaschii (strain ATCC 43067 / DSM 2661 / JAL-1 / JCM 10045 / NBRC 100440) (Methanococcus jannaschii).